A 1437-amino-acid polypeptide reads, in one-letter code: Protein SUPPRESSOR OF npr1-1, CONSTITUTIVE 1 (1437 aa).

At methionine 1 the chain carries N-acetylmethionine. In terms of domain architecture, TIR spans arginine 19 to threonine 182. Arginine 28–arginine 33 is an NAD(+) binding site. Residue glutamate 93 is part of the active site. LRR repeat units lie at residues methionine 554 to proline 576, leucine 577 to alanine 598, tyrosine 600 to leucine 621, glycine 622 to isoleucine 645, leucine 647 to alanine 668, lysine 670 to leucine 691, glutamate 692 to cysteine 715, leucine 781 to threonine 805, leucine 807 to leucine 828, histidine 829 to leucine 851, serine 852 to isoleucine 875, tryptophan 877 to leucine 895, arginine 897 to leucine 918, serine 919 to serine 939, glutamate 940 to threonine 962, leucine 964 to leucine 985, serine 1009 to serine 1029, threonine 1030 to leucine 1052, arginine 1054 to leucine 1075, serine 1076 to serine 1096, threonine 1097 to arginine 1121, threonine 1123 to leucine 1143, and leucine 1161 to tyrosine 1185.

It belongs to the disease resistance TIR-NB-LRR family. As to quaternary structure, homodimer. Interacts (via TIR domain) with TPR1. Interacts with EDS1. Interacts with SRFR1. Interacts with HSP90-3. Binds to MORC1/CRT1. Interacts with TRAF1B. Post-translationally, met-1 is specifically acetylated by N-terminal acetyltransferase complex A (NatA). The NatA-mediated acetylation serves as a degradation signal. Met-1 is specifically acetylated by N-terminal acetyltransferase complex B (NatB). The NatB-mediated acetylation stabilizes SNC1. Expressed in guard cells and epidermal cells, but not detected in mesophyll cells.

It localises to the cytoplasm. It is found in the microsome. Its subcellular location is the nucleus. It catalyses the reaction NAD(+) + H2O = ADP-D-ribose + nicotinamide + H(+). Disease resistance protein of the TIR-NB-LRR-type. Part of the RPP5 locus that contains a cluster of several paralogous disease resistance (R) genes. Resistance proteins guard the plant against pathogens that contain an appropriate avirulence protein via an indirect interaction with this avirulence protein. That triggers a defense system including the hypersensitive response, which restricts the pathogen growth. Probably acts as a NAD(+) hydrolase (NADase): in response to activation, catalyzes cleavage of NAD(+) into ADP-D-ribose (ADPR) and nicotinamide; NAD(+) cleavage triggering a defense system that promotes cell death. Expression regulated by MOS1 at chromatin level. Nuclear localization of SNC1 is essential for its activity. ABA deficiency can rescue high-temperature inhibition of SNC1-mediated defense responses. In Arabidopsis thaliana (Mouse-ear cress), this protein is Protein SUPPRESSOR OF npr1-1, CONSTITUTIVE 1.